Reading from the N-terminus, the 198-residue chain is Leucine-rich melanocyte differentiation-associated protein (198 aa).

LRR repeat units follow at residues Glu-2–Ser-22, Ser-26–Pro-47, Arg-48–Leu-69, and Ala-75–Glu-95. Positions Lys-96–Arg-134 constitute an LRRCT domain.

In the embryo, expressed in melanoblasts. In the fetus, expressed in melanocytes. Not detected in retinal pigment epithelial cells.

Functionally, required for melanocyte differentiation. The polypeptide is Leucine-rich melanocyte differentiation-associated protein (Homo sapiens (Human)).